We begin with the raw amino-acid sequence, 141 residues long: Hemoglobin subunit alpha-1/2 (141 aa).

Positions Val1 to Arg141 constitute a Globin domain. Ser3 is modified (phosphoserine). Position 7 is an N6-succinyllysine (Lys7). Phosphothreonine is present on Thr8. Lys11 carries the N6-succinyllysine modification. Lys16 is modified (N6-acetyllysine; alternate). The residue at position 16 (Lys16) is an N6-succinyllysine; alternate. Tyr24 bears the Phosphotyrosine mark. Ser35 is modified (phosphoserine). Lys40 is subject to N6-succinyllysine. Residue Ser49 is modified to Phosphoserine. Residue His58 coordinates O2. His87 contributes to the heme b binding site. The residue at position 102 (Ser102) is a Phosphoserine. The residue at position 108 (Thr108) is a Phosphothreonine. The residue at position 124 (Ser124) is a Phosphoserine. Phosphothreonine is present on residues Thr134 and Thr137. Ser138 is subject to Phosphoserine.

The protein belongs to the globin family. Heterotetramer of two alpha chains and two beta chains. Red blood cells.

Involved in oxygen transport from the lung to the various peripheral tissues. In Mustela lutreola (European mink), this protein is Hemoglobin subunit alpha-1/2.